A 701-amino-acid polypeptide reads, in one-letter code: MARRGWRRAPLRRGVGSSPRARRLMRPLWLLLAVGVFDWAGASDGGGGEARAMDEEIVSEKQAEESHRQDSANLLIFILLLTLTILTIWLFKHRRARFLHETGLAMIYGLLVGLVLRYGIHVPSDVNNVTLSCEVQSSPTTLLVNVSGKFYEYMLKGEISSHELNNVQDNEMLRKVTFDPEVFFNILLPPIIFYAGYSLKRRHFFRNLGSILAYAFLGTAISCFVIGSIMYGCVTLMKVTGQLAGDFYFTDCLLFGAIVSATDPVTVLAIFHELQVDVELYALLFGESVLNDAVAIVLSSSIVAYQPAGDNSHTFDVTAMFKSIGIFLGIFSGSFAMGAATGVVTALVTKFTKLREFQLLETGLFFLMSWSTFLLAEAWGFTGVVAVLFCGITQAHYTYNNLSTESQHRTKQLFELLNFLAENFIFSYMGLTLFTFQNHVFNPTFVVGAFVAIFLGRAANIYPLSLLLNLGRRSKIGSNFQHMMMFAGLRGAMAFALAIRDTATYARQMMFSTTLLIVFFTVWVFGGGTTAMLSCLHIRVGVDSDQEHLGVPENERRTTKAESAWLFRMWYNFDHNYLKPLLTHSGPPLTTTLPACCGPIARCLTSPQAYENQEQLKDDDSDLILNDGDISLTYGDSTVNTEPATSSAPRRFMGNSSEDALDRELAFGDHELVIRGTRLVLPMDDSEPPLNLLDNTRHGPA.

2 helical membrane passes run 71-91 (SANLLIFILLLTLTILTIWLF) and 103-123 (GLAMIYGLLVGLVLRYGIHVP). Asn128 is a glycosylation site (N-linked (GlcNAc...) asparagine). Helical transmembrane passes span 176-196 (VTFDPEVFFNILLPPIIFYAG), 211-231 (ILAYAFLGTAISCFVIGSIMY), 252-272 (CLLFGAIVSATDPVTVLAIFH), 278-298 (VELYALLFGESVLNDAVAIVL), 324-344 (IGIFLGIFSGSFAMGAATGVV), 372-392 (TFLLAEAWGFTGVVAVLFCGI), 414-434 (FELLNFLAENFIFSYMGLTLF), and 436-456 (FQNHVFNPTFVVGAFVAIFLG). Residue Lys475 forms a Glycyl lysine isopeptide (Lys-Gly) (interchain with G-Cter in ubiquitin) linkage. 2 helical membrane-spanning segments follow: residues 479–499 (NFQHMMMFAGLRGAMAFALAI) and 515–535 (LLIVFFTVWVFGGGTTAMLSC).

Belongs to the monovalent cation:proton antiporter 1 (CPA1) transporter (TC 2.A.36) family. In terms of assembly, homodimer. Interacts with RACK1; regulates the distribution of SLC9A6 between endosomes and the plasma membrane. In terms of processing, ubiquitinated (in vitro). Glycosylated. Ubiquitous. High expression in brain, skeletal muscle, and heart, but is also detected at lower levels in most other tissues.

It localises to the endosome membrane. The protein resides in the recycling endosome membrane. Its subcellular location is the early endosome membrane. It is found in the late endosome membrane. The protein localises to the cell membrane. It catalyses the reaction Na(+)(in) + H(+)(out) = Na(+)(out) + H(+)(in). The catalysed reaction is K(+)(in) + H(+)(out) = K(+)(out) + H(+)(in). Functionally, endosomal Na(+), K(+)/H(+) antiporter. Mediates the electroneutral exchange of endosomal luminal H(+) for a cytosolic Na(+) or K(+). By facilitating proton efflux, SLC9A6 counteracts the acidity generated by vacuolar (V)-ATPase, thereby limiting luminal acidification. Responsible for alkalizing and maintaining the endosomal pH, and consequently in, e.g., endosome maturation and trafficking of recycling endosomal cargo. Plays a critical role during neurodevelopment by regulating synaptic development and plasticity. Implicated in the maintenance of cell polarity in a manner that is dependent on its ability to modulate intravesicular pH. Regulates intracelular pH in some specialized cells, osteoclasts and stereocilia where this transporter localizes to the plasma membrane. This is Sodium/hydrogen exchanger 6 from Homo sapiens (Human).